Here is a 447-residue protein sequence, read N- to C-terminus: Acyl-lipid (7-3)-desaturase (447 aa).

The Cytochrome b5 heme-binding domain occupies 36-94 (LTIVGDSVYDAKAFRSEHPGGAHFVSLFGGRDATEAFMEYHRRAWPKSRMSRFHVGSLA). The heme site is built by His-53 and His-76. 3 helical membrane passes run 123-143 (GFAPASYWVKAGLILGSAIAL), 154-174 (LLPSIVLGWLFALIGLNIQHD), and 185-205 (SVNLALGLCQDWIGGSMILWL). The Histidine box-1 motif lies at 173 to 177 (HDANH). Positions 208-213 (HVVMHH) match the Histidine box-2 motif. Helical transmembrane passes span 244–264 (WLQHLYLLPGETMYAFKLLFL), 286–306 (LFMPSLLLKLTFWARFVALPL), and 315–335 (AVCIAATVMTGSFYLAFFFFI). The Histidine box-3 signature appears at 386 to 390 (QIEHH).

It belongs to the fatty acid desaturase type 1 family. Fe(2+) serves as cofactor.

Its subcellular location is the membrane. The enzyme catalyses a (7Z,10Z,13Z,16Z,19Z)-docosapentaenoyl-containing glycerolipid + 2 Fe(II)-[cytochrome b5] + O2 + 2 H(+) = a (4Z,7Z,10Z,13Z,16Z,19Z)-docosahexaenoyl-containing glycerolipid + 2 Fe(III)-[cytochrome b5] + 2 H2O. The catalysed reaction is a (7Z,10Z,13Z,16Z)-docosatetraenoyl-containing glycerolipid + 2 Fe(II)-[cytochrome b5] + O2 + 2 H(+) = a (4Z,7Z,10Z,13Z,16Z)-docosapentaenoyl-containing glycerolipid + 2 Fe(III)-[cytochrome b5] + 2 H2O. Its function is as follows. Fatty acid desaturase that introduces a cis double bond at the 4-position in 22-carbon polyunsaturated fatty acids that contain a Delta(7) double bond, resulting in the production of delta-4 desaturated fatty acid docosahexanoic acid (DHA). The chain is Acyl-lipid (7-3)-desaturase from Rebecca salina (Marine microalga).